We begin with the raw amino-acid sequence, 513 residues long: HTH-type transcriptional regulatory protein TyrR (513 aa).

The ACT domain occupies 2–72; it reads RLEVFCEDRL…GVTDVRTVPW (71 aa). The region spanning 78–114 is the PAS domain; sequence EHLALSALLEALPEPVLSVDMKSKVDMANPASCQLFG. Positions 206–428 constitute a Sigma-54 factor interaction domain; sequence IVAVSPKMKH…LKNAIYRALT (223 aa). ATP-binding positions include 234–241 and 290–299; these read GDTGTGKD and ANGGSVLLDE. The segment at residues 482–502 is a DNA-binding region (H-T-H motif); sequence STRKLAKRLGVSHTAIANKLR.

As to quaternary structure, homodimer. In presence of tyrosine (or high concentrations of phenylalanine or tryptophan) and ATP, it self-associates to form an hexamer. At low tyrosine concentrations, homodimers can bind to certain recognition sequences referred to as 'strong TyrR boxes'. Homohexamers are the active repressing species, interacting with two or three tyrR boxes in the targeted regulatory DNA, including 'strong TyrR boxes' and lower-affinity sites called 'weak TyrR boxes'.

It is found in the cytoplasm. Binding of ATP strongly enhances the affinity of TyrR for tyrosine. Dual transcriptional regulator of the TyrR regulon, which includes a number of genes coding for proteins involved in the biosynthesis or transport of the three aromatic amino acids, phenylalanine, tyrosine and tryptophan. These three aromatic amino acids act as effectors which bind to the TyrR protein to form an active regulatory protein. Modulates the expression of at least eight unlinked transcription units, including aroF, aroG, aroLM, aroP, mtr, tyrA, tyrB and tyrP. In most cases TyrR acts as a repressor, but positive effects have been observed on the tyrP gene, which is repressed in the presence of tyrosine and activated at high phenylalanine concentrations. Is also involved in activation, but not repression, of mtr expression in association with phenylalanine or tyrosine. Acts by binding specifically to TyrR boxes in the promoter region of the target genes. This is HTH-type transcriptional regulatory protein TyrR from Escherichia coli (strain K12).